The primary structure comprises 251 residues: Early E1A protein (251 aa).

The interval 38–46 is interaction with RB1 in competition with E2F1; that stretch reads ISLHNLFDV. An interaction with UBE2I region spans residues 74 to 136; that stretch reads SADSGAASGD…NYVNIAEGAS (63 aa). Positions 97–101 match the LXCXE motif, interaction with host RB1 and TMEM173/STING motif; the sequence is LKCYE. A disordered region spans residues 102–122; that stretch reads EGLPPSGSEADEAEERAEEEE. The segment covering 110-122 has biased composition (acidic residues); that stretch reads EADEAEERAEEEE. A zinc finger spans residues 150 to 170; sequence CRACDFHRGSSGNPEAMCALC. The PXDLS motif, CTBP-binding signature appears at 240-244; that stretch reads PLNLS. The short motif at 246–250 is the Nuclear localization signal element; it reads KRPKS.

Belongs to the adenoviridae E1A protein family. Interacts with host UBE2I; this interaction interferes with polySUMOylation. Interacts with host RB1; this interaction induces the aberrant dissociation of RB1-E2F1 complex thereby disrupting the activity of RB1 and activating E2F1-regulated genes. Interacts with host ATF7; the interaction enhances ATF7-mediated viral transactivation activity which requires the zinc binding domains of both proteins. Isoform early E1A 32 kDa protein and isoform early E1A 26 kDa protein interact (via N-terminus) with CUL1 and E3 ubiquitin ligase RBX1; these interactions inhibit RBX1-CUL1-dependent elongation reaction of ubiquitin chains and attenuate ubiquitination of SCF(FBXW7) target proteins. Interacts (via PXLXP motif) with host ZMYND11/BS69 (via MYND-type zinc finger); this interaction inhibits E1A mediated transactivation. Interacts with host EP300; this interaction stimulates the acetylation of RB1 by recruiting EP300 and RB1 into a multimeric-protein complex. Interacts with host CTBP1 and CTBP2; this interaction seems to potentiate viral replication. Interacts with host DCAF7. Interacts with host DYRK1A. Interacts with host KPNA4; this interaction allows E1A import into the host nucleus. Interacts with host EP400; this interaction stabilizes MYC. Interacts with host TBP protein; this interaction probably disrupts the TBP-TATA complex. Interacts (via LXCXE motif) with host TMEM173/STING; this interaction impairs the ability of TMEM173/STING to sense cytosolic DNA and promote the production of type I interferon (IFN-alpha and IFN-beta). Interacts (via C-terminus) with host ZBED1/hDREF (via C-terminus); the interaction is direct.

The protein localises to the host nucleus. In terms of biological role, plays a role in viral genome replication by driving entry of quiescent cells into the cell cycle. Stimulation of progression from G1 to S phase allows the virus to efficiently use the cellular DNA replicating machinery to achieve viral genome replication. E1A protein has both transforming and trans-activating activities. Induces the disassembly of the E2F1 transcription factor from RB1 by direct competition for the same binding site on RB1, with subsequent transcriptional activation of E2F1-regulated S-phase genes and of the E2 region of the adenoviral genome. Release of E2F1 leads to the ARF-mediated inhibition of MDM2 and causes TP53/p53 to accumulate because it is not targeted for degradation by MDM2-mediated ubiquitination anymore. This increase in TP53, in turn, would arrest the cell proliferation and direct its death but this effect is counteracted by the viral protein E1B-55K. Inactivation of the ability of RB1 to arrest the cell cycle is critical for cellular transformation, uncontrolled cellular growth and proliferation induced by viral infection. Interaction with RBX1 and CUL1 inhibits ubiquitination of the proteins targeted by SCF(FBXW7) ubiquitin ligase complex, and may be linked to unregulated host cell proliferation. The tumorigenesis-restraining activity of E1A may be related to the disruption of the host CtBP-CtIP complex through the CtBP binding motif. Interaction with host TMEM173/STING impairs the ability of TMEM173/STING to sense cytosolic DNA and promote the production of type I interferon (IFN-alpha and IFN-beta). Promotes the sumoylation of host ZBED1/hDREF with SUMO1. The protein is Early E1A protein of Human adenovirus F serotype 41 (HAdV-41).